We begin with the raw amino-acid sequence, 368 residues long: Phosphate acyltransferase (368 aa).

The tract at residues 335 to 368 (VSLGDGEHDAGGAGHTGPAAGQHAEPPAAQSSKA) is disordered.

This sequence belongs to the PlsX family. As to quaternary structure, homodimer. Probably interacts with PlsY.

It is found in the cytoplasm. The catalysed reaction is a fatty acyl-[ACP] + phosphate = an acyl phosphate + holo-[ACP]. It functions in the pathway lipid metabolism; phospholipid metabolism. Functionally, catalyzes the reversible formation of acyl-phosphate (acyl-PO(4)) from acyl-[acyl-carrier-protein] (acyl-ACP). This enzyme utilizes acyl-ACP as fatty acyl donor, but not acyl-CoA. The chain is Phosphate acyltransferase from Burkholderia vietnamiensis (strain G4 / LMG 22486) (Burkholderia cepacia (strain R1808)).